The following is a 449-amino-acid chain: Tubulin beta-4 chain (449 aa).

Residues 1-4 (MREI) carry the MREI motif motif. Positions 11, 69, 138, 142, 143, 144, 204, and 226 each coordinate GTP. Glu-69 is a Mg(2+) binding site. Positions 421 to 449 (EYQQYQDATAEEEGEMYEDDEEESEQGAK) are disordered. The span at 429-449 (TAEEEGEMYEDDEEESEQGAK) shows a compositional bias: acidic residues. Glu-438 carries the 5-glutamyl polyglutamate modification. A Phosphoserine modification is found at Ser-444.

The protein belongs to the tubulin family. In terms of assembly, dimer of alpha and beta chains. A typical microtubule is a hollow water-filled tube with an outer diameter of 25 nm and an inner diameter of 15 nM. Alpha-beta heterodimers associate head-to-tail to form protofilaments running lengthwise along the microtubule wall with the beta-tubulin subunit facing the microtubule plus end conferring a structural polarity. Microtubules usually have 13 protofilaments but different protofilament numbers can be found in some organisms and specialized cells. It depends on Mg(2+) as a cofactor. Post-translationally, some glutamate residues at the C-terminus are polyglycylated, resulting in polyglycine chains on the gamma-carboxyl group. Glycylation is mainly limited to tubulin incorporated into axonemes (cilia and flagella) whereas glutamylation is prevalent in neuronal cells, centrioles, axonemes, and the mitotic spindle. Both modifications can coexist on the same protein on adjacent residues, and lowering polyglycylation levels increases polyglutamylation, and reciprocally. The precise function of polyglycylation is still unclear. In terms of processing, some glutamate residues at the C-terminus are polyglutamylated, resulting in polyglutamate chains on the gamma-carboxyl group. Polyglutamylation plays a key role in microtubule severing by spastin (SPAST). SPAST preferentially recognizes and acts on microtubules decorated with short polyglutamate tails: severing activity by SPAST increases as the number of glutamates per tubulin rises from one to eight, but decreases beyond this glutamylation threshold. As to expression, neuron specific.

It is found in the cytoplasm. The protein localises to the cytoskeleton. Its function is as follows. Tubulin is the major constituent of microtubules, a cylinder consisting of laterally associated linear protofilaments composed of alpha- and beta-tubulin heterodimers. Microtubules grow by the addition of GTP-tubulin dimers to the microtubule end, where a stabilizing cap forms. Below the cap, tubulin dimers are in GDP-bound state, owing to GTPase activity of alpha-tubulin. This chain is Tubulin beta-4 chain, found in Gallus gallus (Chicken).